The chain runs to 98 residues: NADH-ubiquinone oxidoreductase chain 4L (98 aa).

3 helical membrane-spanning segments follow: residues 1–21 (MSLV…GLLM), 29–49 (SLLC…LTIL), and 61–81 (IILL…LVMV).

The protein belongs to the complex I subunit 4L family. In terms of assembly, core subunit of respiratory chain NADH dehydrogenase (Complex I) which is composed of 45 different subunits.

Its subcellular location is the mitochondrion inner membrane. The catalysed reaction is a ubiquinone + NADH + 5 H(+)(in) = a ubiquinol + NAD(+) + 4 H(+)(out). Functionally, core subunit of the mitochondrial membrane respiratory chain NADH dehydrogenase (Complex I) which catalyzes electron transfer from NADH through the respiratory chain, using ubiquinone as an electron acceptor. Part of the enzyme membrane arm which is embedded in the lipid bilayer and involved in proton translocation. In Muntiacus vuquangensis (Giant muntjac), this protein is NADH-ubiquinone oxidoreductase chain 4L (MT-ND4L).